Reading from the N-terminus, the 199-residue chain is MIKLIVGLGNPGAEYTATRHNAGFWLIDQLAREAGTTLRDERRFHGFYAKARLHGEEVHLLEPQTYMNRSGQSVVALAQFFKILPDQILVAHDELDLPPGTVKLKLGGGSGGHNGLKDITAHLSSQQYWRLRIGIGHPRDLIPESARAGAKPDVANFVLKPPRREEQDVIDASIERALAVMPMVVKGELDRATMQLHRN.

Position 15 (Tyr15) interacts with tRNA. Residue His20 is the Proton acceptor of the active site. Tyr66, Asn68, and Asn114 together coordinate tRNA.

Belongs to the PTH family. In terms of assembly, monomer.

Its subcellular location is the cytoplasm. It catalyses the reaction an N-acyl-L-alpha-aminoacyl-tRNA + H2O = an N-acyl-L-amino acid + a tRNA + H(+). Functionally, hydrolyzes ribosome-free peptidyl-tRNAs (with 1 or more amino acids incorporated), which drop off the ribosome during protein synthesis, or as a result of ribosome stalling. Its function is as follows. Catalyzes the release of premature peptidyl moieties from peptidyl-tRNA molecules trapped in stalled 50S ribosomal subunits, and thus maintains levels of free tRNAs and 50S ribosomes. In Burkholderia cenocepacia (strain ATCC BAA-245 / DSM 16553 / LMG 16656 / NCTC 13227 / J2315 / CF5610) (Burkholderia cepacia (strain J2315)), this protein is Peptidyl-tRNA hydrolase.